The sequence spans 253 residues: Small ribosomal subunit protein eS6 (253 aa).

Positions 200–253 (KKRLAKRKQSENDYAKLLAQRKKESKVRRQEELKRRRSASMRDSKSSDKSAPQK) are disordered. Basic and acidic residues predominate over residues 226 to 247 (VRRQEELKRRRSASMRDSKSSD).

Belongs to the eukaryotic ribosomal protein eS6 family. In terms of assembly, component of the small ribosomal subunit. Part of the small subunit (SSU) processome, composed of more than 70 proteins and the RNA chaperone small nucleolar RNA (snoRNA) U3. Post-translationally, ribosomal protein S6 is the major substrate of protein kinases in eukaryote ribosomes.

It localises to the cytoplasm. Its subcellular location is the nucleus. The protein resides in the nucleolus. In terms of biological role, component of the 40S small ribosomal subunit. Plays an important role in controlling cell growth and proliferation through the selective translation of particular classes of mRNA. Part of the small subunit (SSU) processome, first precursor of the small eukaryotic ribosomal subunit. During the assembly of the SSU processome in the nucleolus, many ribosome biogenesis factors, an RNA chaperone and ribosomal proteins associate with the nascent pre-rRNA and work in concert to generate RNA folding, modifications, rearrangements and cleavage as well as targeted degradation of pre-ribosomal RNA by the RNA exosome. This is Small ribosomal subunit protein eS6 (RpS6) from Spodoptera frugiperda (Fall armyworm).